Consider the following 426-residue polypeptide: Serine--tRNA ligase (426 aa).

233-235 contributes to the L-serine binding site; sequence TSE. 264–266 is an ATP binding site; it reads RSE. Glutamate 287 serves as a coordination point for L-serine. 351-354 lines the ATP pocket; the sequence is EISS. L-serine is bound at residue serine 387.

Belongs to the class-II aminoacyl-tRNA synthetase family. Type-1 seryl-tRNA synthetase subfamily. As to quaternary structure, homodimer. The tRNA molecule binds across the dimer.

It is found in the cytoplasm. It carries out the reaction tRNA(Ser) + L-serine + ATP = L-seryl-tRNA(Ser) + AMP + diphosphate + H(+). It catalyses the reaction tRNA(Sec) + L-serine + ATP = L-seryl-tRNA(Sec) + AMP + diphosphate + H(+). Its pathway is aminoacyl-tRNA biosynthesis; selenocysteinyl-tRNA(Sec) biosynthesis; L-seryl-tRNA(Sec) from L-serine and tRNA(Sec): step 1/1. Functionally, catalyzes the attachment of serine to tRNA(Ser). Is also able to aminoacylate tRNA(Sec) with serine, to form the misacylated tRNA L-seryl-tRNA(Sec), which will be further converted into selenocysteinyl-tRNA(Sec). The sequence is that of Serine--tRNA ligase from Xylella fastidiosa (strain 9a5c).